Reading from the N-terminus, the 186-residue chain is Glutathione peroxidase 7 (186 aa).

An N-terminal signal peptide occupies residues 1–18; it reads MVAAVATAWLLLWAAACA. The active site involves C56.

This sequence belongs to the glutathione peroxidase family.

It is found in the secreted. The catalysed reaction is 2 glutathione + H2O2 = glutathione disulfide + 2 H2O. In terms of biological role, it protects esophageal epithelia from hydrogen peroxide-induced oxidative stress. It suppresses acidic bile acid-induced reactive oxygen species (ROS) and protects against oxidative DNA damage and double-strand breaks. The polypeptide is Glutathione peroxidase 7 (Gpx7) (Mus musculus (Mouse)).